The primary structure comprises 389 residues: Tubulin-like protein CetZ3 (389 aa).

Residues 10-14 (QAGGK), 110-112 (GTG), Glu-142, Asn-169, and Asn-187 contribute to the GTP site.

The protein belongs to the CetZ family.

It is found in the cytoplasm. Involved in cell shape control. This Haloferax volcanii (strain ATCC 29605 / DSM 3757 / JCM 8879 / NBRC 14742 / NCIMB 2012 / VKM B-1768 / DS2) (Halobacterium volcanii) protein is Tubulin-like protein CetZ3.